The sequence spans 384 residues: UDP-N-acetylglucosamine--N-acetylmuramyl-(pentapeptide) pyrophosphoryl-undecaprenol N-acetylglucosamine transferase (384 aa).

UDP-N-acetyl-alpha-D-glucosamine contacts are provided by residues 17–19 (TGG), N131, R172, S200, and Q301.

The protein belongs to the glycosyltransferase 28 family. MurG subfamily.

The protein localises to the cell inner membrane. It carries out the reaction di-trans,octa-cis-undecaprenyl diphospho-N-acetyl-alpha-D-muramoyl-L-alanyl-D-glutamyl-meso-2,6-diaminopimeloyl-D-alanyl-D-alanine + UDP-N-acetyl-alpha-D-glucosamine = di-trans,octa-cis-undecaprenyl diphospho-[N-acetyl-alpha-D-glucosaminyl-(1-&gt;4)]-N-acetyl-alpha-D-muramoyl-L-alanyl-D-glutamyl-meso-2,6-diaminopimeloyl-D-alanyl-D-alanine + UDP + H(+). It functions in the pathway cell wall biogenesis; peptidoglycan biosynthesis. In terms of biological role, cell wall formation. Catalyzes the transfer of a GlcNAc subunit on undecaprenyl-pyrophosphoryl-MurNAc-pentapeptide (lipid intermediate I) to form undecaprenyl-pyrophosphoryl-MurNAc-(pentapeptide)GlcNAc (lipid intermediate II). The protein is UDP-N-acetylglucosamine--N-acetylmuramyl-(pentapeptide) pyrophosphoryl-undecaprenol N-acetylglucosamine transferase of Granulibacter bethesdensis (strain ATCC BAA-1260 / CGDNIH1).